The following is a 160-amino-acid chain: Troponin C, isoform 2 (160 aa).

EF-hand domains lie at 15–50 (DQIE…MGQA), 51–86 (FEER…FVVN), 92–127 (GLEE…LDDN), and 128–160 (VSEE…MSGE). Residues Asp64, Asp66, Ser68, Glu70, and Glu75 each contribute to the Ca(2+) site. 5 residues coordinate Ca(2+): Asp141, Asp143, Ser145, Thr147, and Glu152.

The protein belongs to the troponin C family. In terms of tissue distribution, pharyngeal muscle.

This is Troponin C, isoform 2 (tnc-2) from Caenorhabditis elegans.